The primary structure comprises 116 residues: MFPLNDLSLKTQPVQLNKVTSNTESTIKQHELVSDDAIINELSSELVSCLGNGKFTPISEDSKLFNMLSEFKLLHSEYFEWGDYSLWFQDFSIYNKIGFIMIEKIRELVTHPFGIN.

This is an uncharacterized protein from Escherichia coli (strain K12).